Reading from the N-terminus, the 267-residue chain is Serine acetyltransferase (267 aa).

Belongs to the transferase hexapeptide repeat family.

It is found in the cytoplasm. The enzyme catalyses L-serine + acetyl-CoA = O-acetyl-L-serine + CoA. The protein operates within amino-acid biosynthesis; L-cysteine biosynthesis; L-cysteine from L-serine: step 1/2. The sequence is that of Serine acetyltransferase (cysE) from Haemophilus influenzae (strain ATCC 51907 / DSM 11121 / KW20 / Rd).